The sequence spans 447 residues: Cytochrome P450 BJ-4 homolog (447 aa).

Cys-392 contacts heme.

This sequence belongs to the cytochrome P450 family. Heme serves as cofactor.

Its function is as follows. Cytochromes P450 are a group of heme-thiolate monooxygenases. They oxidize a variety of structurally unrelated compounds, including steroids, fatty acids, and xenobiotics. This is Cytochrome P450 BJ-4 homolog (cyp117A2) from Sinorhizobium fredii (strain NBRC 101917 / NGR234).